Here is a 333-residue protein sequence, read N- to C-terminus: L-lactate dehydrogenase A chain (333 aa).

Residues 30 to 58 (GMVG…MEDK) and R100 each bind NAD(+). Residues R107, N139, and R170 each coordinate substrate. N139 is an NAD(+) binding site. The active-site Proton acceptor is the H194. T249 contacts substrate.

This sequence belongs to the LDH/MDH superfamily. LDH family. Homotetramer.

The protein resides in the cytoplasm. The catalysed reaction is (S)-lactate + NAD(+) = pyruvate + NADH + H(+). It participates in fermentation; pyruvate fermentation to lactate; (S)-lactate from pyruvate: step 1/1. This is L-lactate dehydrogenase A chain (ldha) from Cyprinus carpio (Common carp).